Consider the following 443-residue polypeptide: Tubulin beta chain (443 aa).

The GTP site is built by Q11, E69, S138, G142, T143, G144, N204, and N226. E69 contributes to the Mg(2+) binding site. A disordered region spans residues 424-443 (QYQDASAEEEGEFEGEEEEA). Acidic residues predominate over residues 429–443 (SAEEEGEFEGEEEEA).

This sequence belongs to the tubulin family. As to quaternary structure, dimer of alpha and beta chains. A typical microtubule is a hollow water-filled tube with an outer diameter of 25 nm and an inner diameter of 15 nM. Alpha-beta heterodimers associate head-to-tail to form protofilaments running lengthwise along the microtubule wall with the beta-tubulin subunit facing the microtubule plus end conferring a structural polarity. Microtubules usually have 13 protofilaments but different protofilament numbers can be found in some organisms and specialized cells. Requires Mg(2+) as cofactor.

The protein localises to the cytoplasm. It localises to the cytoskeleton. Functionally, tubulin is the major constituent of microtubules, a cylinder consisting of laterally associated linear protofilaments composed of alpha- and beta-tubulin heterodimers. Microtubules grow by the addition of GTP-tubulin dimers to the microtubule end, where a stabilizing cap forms. Below the cap, tubulin dimers are in GDP-bound state, owing to GTPase activity of alpha-tubulin. The polypeptide is Tubulin beta chain (TUBB) (Chlamydomonas incerta).